A 327-amino-acid chain; its full sequence is Cytochrome c oxidase subunit 2 (327 aa).

The signal sequence occupies residues 1–23 (MEQIPASIWTLTAGVVVTLISFW). The next 2 helical transmembrane spans lie at 56-78 (LFLV…AGEE) and 96-114 (AIPA…DIFQ). Positions 221, 255, 259, and 263 each coordinate Cu cation.

The protein belongs to the cytochrome c oxidase subunit 2 family. Cu cation is required as a cofactor.

It is found in the cell membrane. It catalyses the reaction 4 Fe(II)-[cytochrome c] + O2 + 8 H(+)(in) = 4 Fe(III)-[cytochrome c] + 2 H2O + 4 H(+)(out). Functionally, subunits I and II form the functional core of the enzyme complex. Electrons originating in cytochrome c are transferred via heme a and Cu(A) to the binuclear center formed by heme a3 and Cu(B). This chain is Cytochrome c oxidase subunit 2 (ctaC), found in Thermostichus vulcanus (Synechococcus vulcanus).